A 444-amino-acid polypeptide reads, in one-letter code: N-succinylarginine dihydrolase (444 aa).

Substrate contacts are provided by residues 19–28, Asn110, and 137–138; these read SGLSVGNIAS and HR. Glu174 is a catalytic residue. Arg214 is a binding site for substrate. Residue His250 is part of the active site. The substrate site is built by Asp252 and Asn362. Cys368 (nucleophile) is an active-site residue.

This sequence belongs to the succinylarginine dihydrolase family. Homodimer.

It catalyses the reaction N(2)-succinyl-L-arginine + 2 H2O + 2 H(+) = N(2)-succinyl-L-ornithine + 2 NH4(+) + CO2. It participates in amino-acid degradation; L-arginine degradation via AST pathway; L-glutamate and succinate from L-arginine: step 2/5. Its function is as follows. Catalyzes the hydrolysis of N(2)-succinylarginine into N(2)-succinylornithine, ammonia and CO(2). In Aliivibrio salmonicida (strain LFI1238) (Vibrio salmonicida (strain LFI1238)), this protein is N-succinylarginine dihydrolase.